Here is a 376-residue protein sequence, read N- to C-terminus: Beta-centractin (376 aa).

An N-acetylmethionine modification is found at Met-1. Tyr-4 is modified (3'-nitrotyrosine).

Belongs to the actin family. ARP1 subfamily.

The protein localises to the cytoplasm. The protein resides in the cytoskeleton. It is found in the microtubule organizing center. Its subcellular location is the centrosome. Functionally, component of a multi-subunit complex involved in microtubule based vesicle motility. It is associated with the centrosome. This is Beta-centractin (ACTR1B) from Bos taurus (Bovine).